The chain runs to 101 residues: MSQKIRIKLKSYDHNLVDKSAEKIVRTVKATGAIVSGPIPLPTHKRIFTVNRSTFVNKKSREQFELSSYKRLIDIYSSTAKTVDALMKLELPSGVEVEIKV.

It belongs to the universal ribosomal protein uS10 family. As to quaternary structure, part of the 30S ribosomal subunit.

In terms of biological role, involved in the binding of tRNA to the ribosomes. This is Small ribosomal subunit protein uS10 from Phocaeicola vulgatus (strain ATCC 8482 / DSM 1447 / JCM 5826 / CCUG 4940 / NBRC 14291 / NCTC 11154) (Bacteroides vulgatus).